We begin with the raw amino-acid sequence, 219 residues long: ATP-dependent Clp protease proteolytic subunit 4 (219 aa).

The active-site Nucleophile is the S125. Residue H150 is part of the active site.

The protein belongs to the peptidase S14 family. In terms of assembly, fourteen ClpP subunits assemble into 2 heptameric rings which stack back to back to give a disk-like structure with a central cavity, resembling the structure of eukaryotic proteasomes.

The protein resides in the cytoplasm. The enzyme catalyses Hydrolysis of proteins to small peptides in the presence of ATP and magnesium. alpha-casein is the usual test substrate. In the absence of ATP, only oligopeptides shorter than five residues are hydrolyzed (such as succinyl-Leu-Tyr-|-NHMec, and Leu-Tyr-Leu-|-Tyr-Trp, in which cleavage of the -Tyr-|-Leu- and -Tyr-|-Trp bonds also occurs).. Functionally, cleaves peptides in various proteins in a process that requires ATP hydrolysis. Has a chymotrypsin-like activity. Plays a major role in the degradation of misfolded proteins. This is ATP-dependent Clp protease proteolytic subunit 4 from Prochlorococcus marinus (strain MIT 9312).